The sequence spans 147 residues: Protein phosphatase 1 regulatory subunit 14B (147 aa).

Residues 1 to 15 (MADSGPAGGAALAAP) are compositionally biased toward low complexity. The disordered stretch occupies residues 1 to 55 (MADSGPAGGAALAAPAPGPGSGGAGPRVYFQSPPGAAGEGPGGADDEGPVRRQGK). Ala-2 is modified (N-acetylalanine). Ser-21 is subject to Phosphoserine. Tyr-29 carries the phosphotyrosine modification. Ser-32 carries the post-translational modification Phosphoserine. The residue at position 57 (Thr-57) is a Phosphothreonine. Positions 61-103 (DRKELRKRLNLEEWILEQLTRLYDCQEEEIPELEIDVDELLDM) form a coiled coil.

The protein belongs to the PP1 inhibitor family. Phosphorylated primarily on Thr-57 by PKC (in vitro). An unknown Ser is also phosphorylated by PKC (in vitro).

The protein resides in the cytoplasm. Functionally, inhibitor of PPP1CA. Has over 50-fold higher inhibitory activity when phosphorylated. This is Protein phosphatase 1 regulatory subunit 14B (PPP1R14B) from Sus scrofa (Pig).